A 145-amino-acid polypeptide reads, in one-letter code: Large ribosomal subunit protein eL32 (145 aa).

The protein belongs to the eukaryotic ribosomal protein eL32 family.

This is Large ribosomal subunit protein eL32 (rpl32e) from Aeropyrum pernix (strain ATCC 700893 / DSM 11879 / JCM 9820 / NBRC 100138 / K1).